The following is a 393-amino-acid chain: Arginine biosynthesis bifunctional protein ArgJ (393 aa).

Substrate contacts are provided by Thr145, Lys171, Thr182, Glu265, Asn388, and Ser393. The Nucleophile role is filled by Thr182.

Belongs to the ArgJ family. As to quaternary structure, heterotetramer of two alpha and two beta chains.

Its subcellular location is the cytoplasm. The enzyme catalyses N(2)-acetyl-L-ornithine + L-glutamate = N-acetyl-L-glutamate + L-ornithine. The catalysed reaction is L-glutamate + acetyl-CoA = N-acetyl-L-glutamate + CoA + H(+). Its pathway is amino-acid biosynthesis; L-arginine biosynthesis; L-ornithine and N-acetyl-L-glutamate from L-glutamate and N(2)-acetyl-L-ornithine (cyclic): step 1/1. It participates in amino-acid biosynthesis; L-arginine biosynthesis; N(2)-acetyl-L-ornithine from L-glutamate: step 1/4. Its function is as follows. Catalyzes two activities which are involved in the cyclic version of arginine biosynthesis: the synthesis of N-acetylglutamate from glutamate and acetyl-CoA as the acetyl donor, and of ornithine by transacetylation between N(2)-acetylornithine and glutamate. This is Arginine biosynthesis bifunctional protein ArgJ from Nitratidesulfovibrio vulgaris (strain ATCC 29579 / DSM 644 / CCUG 34227 / NCIMB 8303 / VKM B-1760 / Hildenborough) (Desulfovibrio vulgaris).